We begin with the raw amino-acid sequence, 120 residues long: MRYYEIVLIIHPDSDNQIDNLVNYYSEIIINSTGKIHRLENWGRRQLAYAIKNLNKAYYLLLNIEISKNILDILDNDFRFNEIILRYLIMRTKNIIVDPSAMVKKKDDNNQEGNNSTVCI.

Belongs to the bacterial ribosomal protein bS6 family.

Functionally, binds together with bS18 to 16S ribosomal RNA. This chain is Small ribosomal subunit protein bS6, found in Blochmanniella floridana.